Here is a 367-residue protein sequence, read N- to C-terminus: tRNA-specific 2-thiouridylase MnmA (367 aa).

ATP contacts are provided by residues 13-20 and Met-39; that span reads GLSGGVDS. The interval 99–101 is interaction with target base in tRNA; that stretch reads NPD. Cys-104 (nucleophile) is an active-site residue. A disulfide bridge links Cys-104 with Cys-200. Gly-128 contacts ATP. Residues 150-152 form an interaction with tRNA region; it reads KDQ. Residue Cys-200 is the Cysteine persulfide intermediate of the active site. The tract at residues 307 to 308 is interaction with tRNA; it reads RY.

Belongs to the MnmA/TRMU family.

The protein localises to the cytoplasm. The enzyme catalyses S-sulfanyl-L-cysteinyl-[protein] + uridine(34) in tRNA + AH2 + ATP = 2-thiouridine(34) in tRNA + L-cysteinyl-[protein] + A + AMP + diphosphate + H(+). Catalyzes the 2-thiolation of uridine at the wobble position (U34) of tRNA, leading to the formation of s(2)U34. This chain is tRNA-specific 2-thiouridylase MnmA, found in Neisseria gonorrhoeae (strain ATCC 700825 / FA 1090).